The following is a 491-amino-acid chain: Probable protein phosphatase 2C 6 (491 aa).

The span at 1–16 (MGLCHSKIDKTTRKET) shows a compositional bias: basic and acidic residues. Residues 1–39 (MGLCHSKIDKTTRKETGATSTATTTVERQSSGRLRRPRD) form a disordered region. The span at 17 to 28 (GATSTATTTVER) shows a compositional bias: low complexity. One can recognise a PPM-type phosphatase domain in the interval 64–376 (IACLYTQQGK…DDCAVVCLFL (313 aa)). Residues aspartate 100, glycine 101, aspartate 321, and aspartate 367 each coordinate Mn(2+). A disordered region spans residues 391–422 (VNHSHEESTESVTITSSKDADKKEEASTETNE).

The protein belongs to the PP2C family. Mg(2+) serves as cofactor. Requires Mn(2+) as cofactor.

The catalysed reaction is O-phospho-L-seryl-[protein] + H2O = L-seryl-[protein] + phosphate. It catalyses the reaction O-phospho-L-threonyl-[protein] + H2O = L-threonyl-[protein] + phosphate. The polypeptide is Probable protein phosphatase 2C 6 (Arabidopsis thaliana (Mouse-ear cress)).